Consider the following 213-residue polypeptide: Probable transaldolase (213 aa).

The Schiff-base intermediate with substrate role is filled by Lys83.

The protein belongs to the transaldolase family. Type 3B subfamily.

The protein localises to the cytoplasm. It carries out the reaction D-sedoheptulose 7-phosphate + D-glyceraldehyde 3-phosphate = D-erythrose 4-phosphate + beta-D-fructose 6-phosphate. The protein operates within carbohydrate degradation; pentose phosphate pathway; D-glyceraldehyde 3-phosphate and beta-D-fructose 6-phosphate from D-ribose 5-phosphate and D-xylulose 5-phosphate (non-oxidative stage): step 2/3. Transaldolase is important for the balance of metabolites in the pentose-phosphate pathway. This chain is Probable transaldolase, found in Syntrophomonas wolfei subsp. wolfei (strain DSM 2245B / Goettingen).